A 356-amino-acid chain; its full sequence is Golgi-resident adenosine 3',5'-bisphosphate 3'-phosphatase (356 aa).

The residue at position 1 (Met-1) is an N-acetylmethionine. Residues Met-1–Gly-12 lie on the Cytoplasmic side of the membrane. Residues Val-13–Ala-33 traverse the membrane as a helical segment. At Gly-34–His-356 the chain is on the lumenal side. The segment at Glu-84 to Met-104 is disordered. The active-site Proton acceptor is Asp-108. Glu-131, Asp-172, Leu-174, and Asp-175 together coordinate Mg(2+). The active-site Proton acceptor is Thr-177. Positions 240 and 243 each coordinate AMP. N-linked (GlcNAc...) asparagine glycosylation occurs at Asn-257. 2 residues coordinate AMP: Gly-266 and Lys-270. Asp-298 contributes to the Mg(2+) binding site.

It belongs to the inositol monophosphatase superfamily. Mg(2+) is required as a cofactor. In terms of processing, N-glycosylated. Contains N-linked glycan resistant to endoglycosydase H.

Its subcellular location is the golgi apparatus. It is found in the trans-Golgi network membrane. It carries out the reaction adenosine 3',5'-bisphosphate + H2O = AMP + phosphate. It functions in the pathway sulfur metabolism. Its activity is regulated as follows. Strongly inhibited by lithium. Its function is as follows. Exhibits 3'-nucleotidase activity toward adenosine 3',5'-bisphosphate (PAP), namely hydrolyzes adenosine 3',5'-bisphosphate into adenosine 5'-monophosphate (AMP) and a phosphate. May play a role in the formation of skeletal elements derived through endochondral ossification, possibly by clearing adenosine 3',5'-bisphosphate produced by Golgi sulfotransferases during glycosaminoglycan sulfation. Has no activity toward 3'-phosphoadenosine 5'-phosphosulfate (PAPS) or inositol phosphate (IP) substrates including I(1)P, I(1,4)P2, I(1,3,4)P3, I(1,4,5)P3 and I(1,3,4,5)P4. The polypeptide is Golgi-resident adenosine 3',5'-bisphosphate 3'-phosphatase (Mus musculus (Mouse)).